A 606-amino-acid chain; its full sequence is Alpha-1,2-mannosyltransferase MNN23 (606 aa).

Residues 1–14 lie on the Cytoplasmic side of the membrane; sequence MSINFLSIPRNRFK. A helical transmembrane segment spans residues 15-35; that stretch reads AIGVLSVTCILIYVILHSSII. The Extracellular segment spans residues 36–606; sequence TTDFDVSDYG…QVAWLSKSQN (571 aa). The interval 59–86 is disordered; the sequence is DNGENLKDPQPELDNDKGNGETDTTTSN. The span at 62-78 shows a compositional bias: basic and acidic residues; sequence ENLKDPQPELDNDKGNG.

It belongs to the MNN1/MNT family.

It is found in the golgi apparatus membrane. It functions in the pathway protein modification; protein glycosylation. Functionally, alpha-1,2-mannosyltransferase required for cell wall integrity. Responsible for addition of the first alpha-1,2-linked mannose to form the branches on the mannan backbone of oligosaccharides. Addition of alpha-1,2-mannose is required for stabilization of the alpha-1,6-mannose backbone and hence regulates mannan fibril length; and is important for both immune recognition and virulence. In Candida albicans (strain SC5314 / ATCC MYA-2876) (Yeast), this protein is Alpha-1,2-mannosyltransferase MNN23 (MNN23).